The chain runs to 115 residues: MSDLDIQIPTAFDPFAEANAGDSGAAAGSKDYVHVRIQQRNGRKSLTTVQGLKKEFSYNKILKDLKKEFCCNGTVVQDPELGQVIQLQGDQRKNVSNFLVQAGIVKKEHIKIHGF.

It belongs to the SUI1 family. As to expression, expressed in all tissues examined.

In terms of biological role, probably involved in translation. In Oryza sativa subsp. indica (Rice), this protein is Protein translation factor SUI1 homolog (GOS2).